Consider the following 868-residue polypeptide: Thiol protease/hemagglutinin PrtT (868 aa).

The N-terminal stretch at 1–27 (MKRIFYTLGLLLLCLPMLQAGPVTRSK) is a signal peptide. Catalysis depends on residues Cys-184 and His-327.

Belongs to the peptidase C10 family.

In terms of biological role, appears to be specific for arginine-containing peptide bonds. Possesses hemagglutinin activity. The protein is Thiol protease/hemagglutinin PrtT (prtT) of Porphyromonas gingivalis (Bacteroides gingivalis).